The chain runs to 439 residues: Acetyl esterase Axe7A (439 aa).

Positions 1-31 are cleaved as a signal peptide; that stretch reads MFNFAPKQTTEMKKLLFTLVFVLGSMATALA. Ser-309 acts as the Nucleophile in catalysis. Active-site charge relay system residues include Asp-391 and His-420.

This sequence belongs to the carbohydrate esterase 7 family.

Its pathway is glycan degradation; xylan degradation. Functionally, involved in degradation of plant cell wall polysaccharides. Has acetyl esterase activity towards a broad range of substrates including xylose-tetraacetate, 4-O-methylumbelliferyl acetate, glucose-pentaacetate, cephalosporin C, and acetylated xylo-oligosaccharides smaller than xylo-heptaose. Displays no detectable activity on polymeric acetylated xylan. This is Acetyl esterase Axe7A from Xylanibacter ruminicola (strain ATCC 19189 / DSM 19721 / CIP 105475 / JCM 8958 / 23) (Prevotella ruminicola).